The chain runs to 445 residues: Histidinol dehydrogenase (445 aa).

NAD(+) contacts are provided by Tyr-136, Gln-200, and Asn-228. Thr-251, Gln-273, and His-276 together coordinate substrate. Zn(2+)-binding residues include Gln-273 and His-276. Residues Glu-342 and His-343 each act as proton acceptor in the active site. Substrate contacts are provided by His-343, Asp-376, Glu-430, and His-435. Asp-376 serves as a coordination point for Zn(2+). His-435 is a Zn(2+) binding site.

The protein belongs to the histidinol dehydrogenase family. Requires Zn(2+) as cofactor.

It catalyses the reaction L-histidinol + 2 NAD(+) + H2O = L-histidine + 2 NADH + 3 H(+). Its pathway is amino-acid biosynthesis; L-histidine biosynthesis; L-histidine from 5-phospho-alpha-D-ribose 1-diphosphate: step 9/9. In terms of biological role, catalyzes the sequential NAD-dependent oxidations of L-histidinol to L-histidinaldehyde and then to L-histidine. This is Histidinol dehydrogenase (hisD) from Mycolicibacterium smegmatis (Mycobacterium smegmatis).